The sequence spans 327 residues: MAIITLLEAINQAIDQAMEKDESIVVFGEDAGFEGGVFRVTAGLQKKYGETRVFDTPIAESAIVGSAVGMAINGLKPIAEIQFDGFIFPGYTDLVTHAARMRNRSRGQFTVPMVLRLPHGGGIRALEHHSEALEVLFGSIPGLKVVTPSTPYDAKGLLLAAINDPDPVVFLEPKRIYRAGKQEVPAEMYEIPIGKAKVVKQGTDMTVVAWGSIVREVEKAVKLVEAEGISVEIIDLRTISPIDEETILNSVKKTGKFMVVTEAVKSYGPAAELITMVNEKAFFHLEAAPVRFTGFDITVPLARGEHYHFPQPEKIAAYIRKLAKARP.

E60 lines the thiamine diphosphate pocket.

As to quaternary structure, heterodimer of an alpha and a beta chain. It depends on thiamine diphosphate as a cofactor.

It carries out the reaction N(6)-[(R)-lipoyl]-L-lysyl-[protein] + pyruvate + H(+) = N(6)-[(R)-S(8)-acetyldihydrolipoyl]-L-lysyl-[protein] + CO2. The pyruvate dehydrogenase complex catalyzes the overall conversion of pyruvate to acetyl-CoA and CO(2). It contains multiple copies of three enzymatic components: pyruvate dehydrogenase (E1), dihydrolipoamide acetyltransferase (E2) and lipoamide dehydrogenase (E3). The chain is Pyruvate dehydrogenase E1 component subunit beta (pdhB) from Acholeplasma laidlawii.